The primary structure comprises 68 residues: uncharacterized protein (68 aa).

2 helical membrane-spanning segments follow: residues 1 to 21 (MLFI…YFLP) and 28 to 48 (VHFS…LSSV).

It is found in the cell membrane. This is an uncharacterized protein from Haemophilus influenzae (strain ATCC 51907 / DSM 11121 / KW20 / Rd).